A 103-amino-acid chain; its full sequence is Large ribosomal subunit protein bL21 (103 aa).

It belongs to the bacterial ribosomal protein bL21 family. As to quaternary structure, part of the 50S ribosomal subunit. Contacts protein L20.

Functionally, this protein binds to 23S rRNA in the presence of protein L20. The chain is Large ribosomal subunit protein bL21 from Hahella chejuensis (strain KCTC 2396).